A 91-amino-acid chain; its full sequence is Non-specific lipid-transfer protein P3 (91 aa).

4 disulfides stabilise this stretch: cysteine 3–cysteine 50, cysteine 13–cysteine 27, cysteine 28–cysteine 73, and cysteine 48–cysteine 87.

It localises to the secreted. Plant non-specific lipid-transfer proteins transfer phospholipids as well as galactolipids across membranes. May play a role in wax or cutin deposition in the cell walls of expanding epidermal cells and certain secretory tissues. The protein is Non-specific lipid-transfer protein P3 of Vitis sp. (Grape).